Here is an 81-residue protein sequence, read N- to C-terminus: ATP synthase subunit c, chloroplastic (81 aa).

The next 2 membrane-spanning stretches (helical) occupy residues 3-23 (PLISAASVIAAGLAVGLASIG) and 57-77 (LAFMEALSIYGLVVALALLFA).

This sequence belongs to the ATPase C chain family. In terms of assembly, F-type ATPases have 2 components, F(1) - the catalytic core - and F(0) - the membrane proton channel. F(1) has five subunits: alpha(3), beta(3), gamma(1), delta(1), epsilon(1). F(0) has four main subunits: a(1), b(1), b'(1) and c(10-14). The alpha and beta chains form an alternating ring which encloses part of the gamma chain. F(1) is attached to F(0) by a central stalk formed by the gamma and epsilon chains, while a peripheral stalk is formed by the delta, b and b' chains.

It localises to the plastid. The protein localises to the chloroplast thylakoid membrane. In terms of biological role, f(1)F(0) ATP synthase produces ATP from ADP in the presence of a proton or sodium gradient. F-type ATPases consist of two structural domains, F(1) containing the extramembraneous catalytic core and F(0) containing the membrane proton channel, linked together by a central stalk and a peripheral stalk. During catalysis, ATP synthesis in the catalytic domain of F(1) is coupled via a rotary mechanism of the central stalk subunits to proton translocation. Its function is as follows. Key component of the F(0) channel; it plays a direct role in translocation across the membrane. A homomeric c-ring of between 10-14 subunits forms the central stalk rotor element with the F(1) delta and epsilon subunits. This is ATP synthase subunit c, chloroplastic from Gossypium barbadense (Sea Island cotton).